The chain runs to 637 residues: Transcription factor PHYTOCHROME INTERACTING FACTOR-LIKE 15 (637 aa).

Residues 35-46 (FFGGTGGGGGGS) show a composition bias toward gly residues. Disordered regions lie at residues 35–54 (FFGG…QERQ), 146–213 (ASLP…EGVM), and 356–397 (ECSA…RRRR). Residues 149–170 (PASNHNGATNNRNAPVATTTTR) are compositionally biased toward polar residues. The segment at 384-397 (RTAEVHNLSERRRR) is basic motif. The segment covering 384–397 (RTAEVHNLSERRRR) has biased composition (basic and acidic residues). Residues 384–433 (RTAEVHNLSERRRRDRINEKMRALQELIPNCNKIDKASMLDEAIEYLKTL) enclose the bHLH domain. The helix-loop-helix motif stretch occupies residues 398–433 (DRINEKMRALQELIPNCNKIDKASMLDEAIEYLKTL). The tract at residues 601-637 (GDNENFRIPSSAQTKSSQFSDGTGKGTNARERDGAET) is disordered. Residues 608–621 (IPSSAQTKSSQFSD) are compositionally biased toward polar residues. The segment covering 628–637 (NARERDGAET) has biased composition (basic and acidic residues).

The protein belongs to the bHLH protein family. Interacts with LF and PRR1.

The protein localises to the nucleus. In terms of biological role, transcription factor that may act as negative regulator of phyB-dependent light signal transduction. This chain is Transcription factor PHYTOCHROME INTERACTING FACTOR-LIKE 15, found in Oryza sativa subsp. japonica (Rice).